A 250-amino-acid polypeptide reads, in one-letter code: Purine nucleoside phosphorylase BQ2027_MB2173C (250 aa).

Zn(2+) is bound by residues His77, Cys114, and His131.

The protein belongs to the purine nucleoside phosphorylase YfiH/LACC1 family. As to quaternary structure, homodimer. Cu(2+) serves as cofactor. It depends on Zn(2+) as a cofactor.

It carries out the reaction adenosine + phosphate = alpha-D-ribose 1-phosphate + adenine. The enzyme catalyses S-methyl-5'-thioadenosine + phosphate = 5-(methylsulfanyl)-alpha-D-ribose 1-phosphate + adenine. It catalyses the reaction inosine + phosphate = alpha-D-ribose 1-phosphate + hypoxanthine. The catalysed reaction is adenosine + H2O + H(+) = inosine + NH4(+). Functionally, purine nucleoside enzyme that catalyzes the phosphorolysis of adenosine and inosine nucleosides, yielding D-ribose 1-phosphate and the respective free bases, adenine and hypoxanthine. Also catalyzes the phosphorolysis of S-methyl-5'-thioadenosine into adenine and S-methyl-5-thio-alpha-D-ribose 1-phosphate. Also has adenosine deaminase activity. In Mycobacterium bovis (strain ATCC BAA-935 / AF2122/97), this protein is Purine nucleoside phosphorylase BQ2027_MB2173C.